Reading from the N-terminus, the 327-residue chain is Probable serine/threonine-protein kinase WNK5 (327 aa).

Residues 1 to 48 form a disordered region; that stretch reads MPPNPTPPRRATTTTTRATSGVRRGEEEQGGMAVSASAGEEEEAFEEV. The segment covering 9-19 has biased composition (low complexity); sequence RRATTTTTRAT. Acidic residues predominate over residues 39 to 48; that stretch reads GEEEEAFEEV. Residues 55–314 enclose the Protein kinase domain; it reads GRYADVLGLG…AAELLRDPFF (260 aa). An ATP-binding site is contributed by 136–139; that stretch reads TEVC. Asp-203 (proton acceptor) is an active-site residue.

It belongs to the protein kinase superfamily. Ser/Thr protein kinase family. WNK subfamily.

It catalyses the reaction L-seryl-[protein] + ATP = O-phospho-L-seryl-[protein] + ADP + H(+). The catalysed reaction is L-threonyl-[protein] + ATP = O-phospho-L-threonyl-[protein] + ADP + H(+). This Oryza sativa subsp. japonica (Rice) protein is Probable serine/threonine-protein kinase WNK5 (WNK5).